The sequence spans 226 residues: Insulin-like growth factor-binding protein 6 (226 aa).

The first 25 residues, 1-25, serve as a signal peptide directing secretion; the sequence is MTWDGLPTQPLLMLLMLLFAAGSES. Positions 26–99 constitute an IGFBP N-terminal domain; it reads ALAGCPGCGP…LIGQGRCQRA (74 aa). Cystine bridges form between C30/C33, C49/C55, C63/C76, and C70/C96. The segment at 92-148 is disordered; sequence GQGRCQRARGPSEETTKESKPHGGASRPRDRDRQKNPRTSAAPIRPSPVQDGEMGPC. Residues 101–126 are compositionally biased toward basic and acidic residues; the sequence is GPSEETTKESKPHGGASRPRDRDRQK. A Thyroglobulin type-1 domain is found at 145–220; it reads MGPCRRHLDS…SPDGQGSSQC (76 aa). Disulfide bonds link C148–C176, C187–C198, and C200–C220. The tract at residues 205-226 is disordered; sequence GQPLPVSPDGQGSSQCSARSSG. A compositionally biased stretch (polar residues) spans 214-226; the sequence is GQGSSQCSARSSG.

As to quaternary structure, interacts (via C-terminal domain) with PHB2. O-glycosylated.

Its subcellular location is the secreted. IGF-binding proteins prolong the half-life of the IGFs and have been shown to either inhibit or stimulate the growth promoting effects of the IGFs on cell culture. They alter the interaction of IGFs with their cell surface receptors. Activates the MAPK signaling pathway and induces cell migration. The sequence is that of Insulin-like growth factor-binding protein 6 (Igfbp6) from Rattus norvegicus (Rat).